We begin with the raw amino-acid sequence, 204 residues long: MILGIDEAGRGCLAGSLFVAGVACDDQTALEFLKMGLKDSKKLSPKKRFFLEDKIKTHGEVGFFVVKKSANEIDSLGLGACLKLAVQEILENGCSLANEIKIDGNTAFGLNKRYPNIQTIIKGDEKIAQIAMASVLAKAFKDREMRQLHALFKEYGWDKNCGYGTKQHIEAISKLGATPFHRHSFTLKNRILNPKLLEVEQRLI.

Residues 1–197 form the RNase H type-2 domain; it reads MILGIDEAGR…KNRILNPKLL (197 aa). The a divalent metal cation site is built by Asp6, Glu7, and Asp103.

This sequence belongs to the RNase HII family. Mn(2+) serves as cofactor. Mg(2+) is required as a cofactor.

The protein resides in the cytoplasm. It carries out the reaction Endonucleolytic cleavage to 5'-phosphomonoester.. Functionally, endonuclease that specifically degrades the RNA of RNA-DNA hybrids. This is Ribonuclease HII from Helicobacter pylori (strain G27).